A 215-amino-acid polypeptide reads, in one-letter code: Large ribosomal subunit protein bL25 (215 aa).

Over residues 192-203 (EEATEEEEEAAE) the composition is skewed to acidic residues. The interval 192–215 (EEATEEEEEAAEPEVIKRKEEEEE) is disordered. Residues 205 to 215 (EVIKRKEEEEE) are compositionally biased toward basic and acidic residues.

This sequence belongs to the bacterial ribosomal protein bL25 family. CTC subfamily. In terms of assembly, part of the 50S ribosomal subunit; part of the 5S rRNA/L5/L18/L25 subcomplex. Contacts the 5S rRNA. Binds to the 5S rRNA independently of L5 and L18.

In terms of biological role, this is one of the proteins that binds to the 5S RNA in the ribosome where it forms part of the central protuberance. The protein is Large ribosomal subunit protein bL25 of Thermotoga sp. (strain RQ2).